Consider the following 137-residue polypeptide: Probable 4-amino-4-deoxy-L-arabinose-phosphoundecaprenol flippase subunit ArnF (137 aa).

Topologically, residues 1–5 (MSRAR) are cytoplasmic. A helical transmembrane segment spans residues 6 to 26 (GFAFALGSVALVSGAQLGMRW). The Periplasmic portion of the chain corresponds to 27 to 49 (SMTRLPAPDQWLPALSAGSVDLA). Residues 50 to 70 (ALAVVAAAIAAYALSMLCWLL) traverse the membrane as a helical segment. Topologically, residues 71–80 (ALRDLPLGRA) are cytoplasmic. Residues 81–101 (YSLLSISYALVYLLAASLPLF) form a helical membrane-spanning segment. Asparagine 102 is a topological domain (periplasmic). A helical transmembrane segment spans residues 103–123 (EPFTLSKTLGVALVILGVITI). Residues 124–137 (NSRSAPATSPRNTP) are Cytoplasmic-facing.

Belongs to the ArnF family. In terms of assembly, heterodimer of ArnE and ArnF.

Its subcellular location is the cell inner membrane. Its pathway is bacterial outer membrane biogenesis; lipopolysaccharide biosynthesis. Functionally, translocates 4-amino-4-deoxy-L-arabinose-phosphoundecaprenol (alpha-L-Ara4N-phosphoundecaprenol) from the cytoplasmic to the periplasmic side of the inner membrane. The polypeptide is Probable 4-amino-4-deoxy-L-arabinose-phosphoundecaprenol flippase subunit ArnF (Pseudomonas fluorescens (strain ATCC BAA-477 / NRRL B-23932 / Pf-5)).